The following is an 816-amino-acid chain: uncharacterized protein (816 aa).

2 disordered regions span residues 1–81 and 391–411; these read MDVV…NSNN and LGSNSSTNENDSNDHDSNNDF. Residues 28-44 are compositionally biased toward low complexity; the sequence is EVPPQRPRQQNRWKPWW. Residues 64 to 81 are compositionally biased toward polar residues; it reads QGRSSPTTDFQDSVNSNN. A phosphoserine mark is found at Ser-76 and Ser-79. Residues 391–400 show a composition bias toward low complexity; the sequence is LGSNSSTNEN.

This is an uncharacterized protein from Saccharomyces cerevisiae (strain ATCC 204508 / S288c) (Baker's yeast).